Reading from the N-terminus, the 209-residue chain is Protease (209 aa).

Residues H55, D72, and C123 contribute to the active site.

This sequence belongs to the peptidase C5 family. As to quaternary structure, interacts with protease cofactor pVI-C; this interaction is necessary for protease activation.

The protein localises to the virion. It is found in the host nucleus. It carries out the reaction Cleaves proteins of the adenovirus and its host cell at two consensus sites: -Yaa-Xaa-Gly-Gly-|-Xaa- and -Yaa-Xaa-Gly-Xaa-|-Gly- (in which Yaa is Met, Ile or Leu, and Xaa is any amino acid).. Requires DNA and protease cofactor for maximal activation. Inside nascent virions, becomes partially activated by binding to the viral DNA, allowing it to cleave the cofactor that binds to the protease and fully activates it. Actin, like the viral protease cofactor, seems to act as a cofactor in the cleavage of cytokeratin 18 and of actin itself. Functionally, cleaves viral precursor proteins (pTP, pIIIa, pVI, pVII, pVIII, and pX) inside newly assembled particles giving rise to mature virions. Protease complexed to its cofactor slides along the viral DNA to specifically locate and cleave the viral precursors. Mature virions have a weakened organization compared to the unmature virions, thereby facilitating subsequent uncoating. Without maturation, the particle lacks infectivity and is unable to uncoat. Late in adenovirus infection, in the cytoplasm, may participate in the cytoskeleton destruction. Cleaves host cell cytoskeletal keratins K7 and K18. This Human adenovirus D serotype 9 (HAdV-9) protein is Protease.